We begin with the raw amino-acid sequence, 689 residues long: Beta-adrenergic receptor kinase 1 (689 aa).

An N-terminal region spans residues 1–190 (MADLEAVLAD…ELNIHLTMND (190 aa)). An RGS domain is found at 54-175 (TFEKIFSQKL…IESDKFTRFC (122 aa)). The region spanning 191–453 (FSVHRIIGRG…AQEVKESPFF (263 aa)) is the Protein kinase domain. ATP is bound by residues 197–205 (IGRGGFGEV) and K220. Catalysis depends on D317, which acts as the Proton acceptor. Residues 454–521 (RSLDWQMVFL…TISERWQQEV (68 aa)) form the AGC-kinase C-terminal domain. The region spanning 558–652 (DCIMHGYMSK…WKKELRDAYR (95 aa)) is the PH domain. Phosphoserine is present on S670.

It belongs to the protein kinase superfamily. AGC Ser/Thr protein kinase family. GPRK subfamily. As to quaternary structure, interacts with the heterodimer formed by GNB1 and GNG2. Interacts with GIT1. Interacts with, and phosphorylates chemokine-stimulated CCR5. Interacts with ARRB1. Interacts with LPAR1 and LPAR2. Interacts with RALA in response to LPAR1 activation. ADRBK1 and RALA mutually inhibit each other's binding to LPAR1. Interacts with ADRB2. In terms of tissue distribution, expressed in peripheral blood leukocytes.

The protein localises to the cytoplasm. The protein resides in the cell membrane. Its subcellular location is the postsynapse. It is found in the presynapse. It carries out the reaction [beta-adrenergic receptor] + ATP = [beta-adrenergic receptor]-phosphate + ADP + H(+). With respect to regulation, in contrast to other AGC family kinases, the catalytic activity is solely regulated by the binding of substrates and ligands, not by phosphorylation of the kinase domain. Specifically phosphorylates the agonist-occupied form of the beta-adrenergic and closely related receptors, probably inducing a desensitization of them. Key regulator of LPAR1 signaling. Competes with RALA for binding to LPAR1 thus affecting the signaling properties of the receptor. Desensitizes LPAR1 and LPAR2 in a phosphorylation-independent manner. Positively regulates ciliary smoothened (SMO)-dependent Hedgehog (Hh) signaling pathway by facilitating the trafficking of SMO into the cilium and the stimulation of SMO activity. Inhibits relaxation of airway smooth muscle in response to blue light. This chain is Beta-adrenergic receptor kinase 1, found in Homo sapiens (Human).